The chain runs to 396 residues: Acetate kinase (396 aa).

A Mg(2+)-binding site is contributed by Asn-8. Lys-15 is a binding site for ATP. Arg-89 provides a ligand contact to substrate. Asp-146 acts as the Proton donor/acceptor in catalysis. ATP-binding positions include 206-210 (HLGNG), 280-282 (DMR), and 328-332 (GVGEN). A Mg(2+)-binding site is contributed by Glu-382.

The protein belongs to the acetokinase family. As to quaternary structure, homodimer. Mg(2+) is required as a cofactor. Mn(2+) serves as cofactor.

It localises to the cytoplasm. It carries out the reaction acetate + ATP = acetyl phosphate + ADP. Its pathway is metabolic intermediate biosynthesis; acetyl-CoA biosynthesis; acetyl-CoA from acetate: step 1/2. In terms of biological role, catalyzes the formation of acetyl phosphate from acetate and ATP. Can also catalyze the reverse reaction. This is Acetate kinase from Clavibacter michiganensis subsp. michiganensis (strain NCPPB 382).